Consider the following 217-residue polypeptide: Ribonuclease T (217 aa).

The Exonuclease domain maps to valine 20–phenylalanine 195. The Mg(2+) site is built by aspartate 23, glutamate 25, histidine 182, and aspartate 187. Histidine 182 functions as the Proton donor/acceptor in the catalytic mechanism.

It belongs to the RNase T family. Homodimer. It depends on Mg(2+) as a cofactor.

Functionally, trims short 3' overhangs of a variety of RNA species, leaving a one or two nucleotide 3' overhang. Responsible for the end-turnover of tRNA: specifically removes the terminal AMP residue from uncharged tRNA (tRNA-C-C-A). Also appears to be involved in tRNA biosynthesis. The protein is Ribonuclease T of Vibrio vulnificus (strain YJ016).